Reading from the N-terminus, the 261-residue chain is Synaptophysin-like protein 1 (261 aa).

At 1–33 the chain is on the cytoplasmic side; it reads MASKANMVRQRFSRLSQRMSAFQINLNPLKEPL. Positions 28–239 constitute an MARVEL domain; the sequence is PLKEPLGFIK…NAWFVYKETS (212 aa). Residues 34 to 54 traverse the membrane as a helical segment; that stretch reads GFIKILEWFASIFAFATCGGF. Over 55–117 the chain is Vesicular; the sequence is KGKTEIQVNC…LIGDYSSSAQ (63 aa). N-linked (GlcNAc...) asparagine glycosylation is found at N72 and N95. The chain crosses the membrane as a helical span at residues 118–138; it reads FYVTFAVFVFLYCIAALLLYV. At 139–151 the chain is on the cytoplasmic side; sequence GYTNLYRDSRKLP. A helical membrane pass occupies residues 152–172; sequence MIDFIVTLVATFLWLVSSSAW. Residues 173–214 lie on the Vesicular side of the membrane; it reads AKALTDIKVATGHRIVEELEICNPESGVSCYFVSVTSMGSLN. N214 is a glycosylation site (N-linked (GlcNAc...) asparagine). The chain crosses the membrane as a helical span at residues 215–235; it reads VSVIFGFLNMILWGGNAWFVY. Over 236–261 the chain is Cytoplasmic; that stretch reads KETSLHSPSNTSASHSQGGGPPTSGM. Residues 241-251 are compositionally biased toward polar residues; it reads HSPSNTSASHS. The disordered stretch occupies residues 241-261; that stretch reads HSPSNTSASHSQGGGPPTSGM. Residues 252-261 show a composition bias toward gly residues; sequence QGGGPPTSGM.

This sequence belongs to the synaptophysin/synaptobrevin family. In terms of tissue distribution, ubiquitously expressed.

The protein resides in the cytoplasmic vesicle membrane. It localises to the melanosome. The polypeptide is Synaptophysin-like protein 1 (Sypl1) (Mus musculus (Mouse)).